The sequence spans 521 residues: HTH-type transcriptional regulatory protein TyrR (521 aa).

One can recognise an ACT domain in the interval 2–72; that stretch reads RLEVFCQDRI…GVTDVRTVPY (71 aa). A PAS domain is found at 78–120; that stretch reads EHRVLSALLVAMPEPVFSVDLRTKVELANPAAQNLFNLDENKI. The region spanning 207–436 is the Sigma-54 factor interaction domain; sequence IVAVTPRMRQ…LKNALYRALT (230 aa). Residues 235–242 and 298–307 contribute to the ATP site; these read GDTGTGKD and ANGGSVLLDE. The H-T-H motif DNA-binding region spans 489–509; sequence STRKLAKRLGVSHTAIANKLR.

Homodimer. In presence of tyrosine (or high concentrations of phenylalanine or tryptophan) and ATP, it self-associates to form an hexamer.

The protein resides in the cytoplasm. In terms of biological role, dual transcriptional regulator of the TyrR regulon, which includes a number of genes coding for proteins involved in the biosynthesis or transport of the three aromatic amino acids, phenylalanine, tyrosine and tryptophan. These three aromatic amino acids act as effectors which bind to the TyrR protein to form an active regulatory protein. Acts by binding specifically to TyrR boxes in the promoter region of the target genes. The protein is HTH-type transcriptional regulatory protein TyrR of Enterobacter agglomerans (Erwinia herbicola).